The sequence spans 906 residues: Glutamate receptor 1 (906 aa).

The signal sequence occupies residues 1–18 (MQHIFAFFCTGFLGAVVG). Residues 19–536 (ANFPNNIQIG…GVFSFLDPLA (518 aa)) are Extracellular-facing. Residues Asn-63, Asn-249, Asn-257, Asn-363, Asn-401, and Asn-406 are each glycosylated (N-linked (GlcNAc...) asparagine). An intrachain disulfide couples Cys-75 to Cys-323. Residues Pro-492, Thr-494, and Arg-499 each coordinate L-glutamate. Residues 537 to 557 (YEIWMCIVFAYIGVSVVLFLV) form a helical membrane-spanning segment. Over 558–584 (SRFSPYEWHSEEFEEGRDQTTSDQSNE) the chain is Cytoplasmic. The helical; Pore-forming intramembrane region spans 585–600 (FGIFNSLWFSLGAFMQ). The stretch at 601 to 603 (QGC) is an intramembrane region. Cys-603 carries S-palmitoyl cysteine lipidation. The Cytoplasmic segment spans residues 604–609 (DISPRS). Residues 610–630 (LSGRIVGGVWWFFTLIIISSY) form a helical membrane-spanning segment. The Extracellular portion of the chain corresponds to 631–805 (TANLAAFLTV…DKTSALSLSN (175 aa)). Phosphoserine is present on Ser-645. L-glutamate-binding residues include Ser-668 and Thr-669. A Phosphoserine modification is found at Ser-710. Glu-719 serves as a coordination point for L-glutamate. A disulfide bridge links Cys-732 with Cys-787. A helical transmembrane segment spans residues 806-826 (VAGVFYILIGGLGLAMLVALI). Topologically, residues 827-906 (EFCYKSRSES…SGMPLGATGL (80 aa)) are cytoplasmic. A lipid anchor (S-palmitoyl cysteine) is attached at Cys-829. 2 positions are modified to phosphoserine: Ser-849 and Ser-863. Positions 861–880 (RNSGAGASSGGSGENGRVVS) are disordered. Positions 903-906 (ATGL) match the PDZ-binding motif.

It belongs to the glutamate-gated ion channel (TC 1.A.10.1) family. GRIA1 subfamily. As to quaternary structure, homotetramer or heterotetramer of pore-forming glutamate receptor subunits; heteromeric assembly can be the result of both receptor subtype and flip or flop form and according the composition, one partner can be dominant with respect to the fast desensitizing current component, whereas the other can determine the steady-state component. Tetramers may be formed by the dimerization of dimers. Found in a complex with GRIA2, GRIA3, GRIA4, CNIH2, CNIH3, CACNG2, CACNG3, CACNG4, CACNG5, CACNG7 and CACNG8. Interacts with HIP1 and RASGRF2. Interacts with SYNDIG1 and GRIA2. Interacts with DLG1 (via C-terminus). Interacts with LRFN1. Interacts with PRKG2. Interacts with CNIH2 and CACNG2. Interacts with CACNG5; this interaction modulates the gating. Interacts (via C-terminus) with PDLIM4 (via LIM domain); this interaction as well as the interaction of PDLIM4 with alpha-actinin is required for their colocalization in early endosomes. Interacts with SNX27 (via PDZ domain); the interaction is required for recycling to the plasma membrane when endocytosed and prevent degradation in lysosomes. Interacts (via PDZ-binding motif) with SHANK3 (via PDZ domain). Interacts with CACNG3; associates GRIA1 with the adapter protein complex 4 (AP-4) to target GRIA1 to the somatodendritic compartment of neurons. Interacts with CACNG2; this interaction mediates traffick to the plasma membrane and modulation of desensitization. Interacts with CNIH2 and CNIH3; this interaction promotes expression at the plasma membrane and extensively modulates their gating properties by slowing deactivation and desensitization kinetics. Found in a complex with GRIA2, GRIA3, GRIA4, DLG4, CACNG8 and CNIH2. Post-translationally, palmitoylated. Depalmitoylated by CPT1C and upon L-glutamate stimulation. ZDHHC3/GODZ specifically palmitoylates Cys-603, which leads to Golgi retention and decreased cell surface expression. In contrast, Cys-829 palmitoylation does not affect cell surface expression but regulates stimulation-dependent endocytosis. Phosphorylated at Ser-645. Phosphorylated at Ser-710 by PKC. Phosphorylated at Ser-849 by PKC, PKA and CAMK2. Phosphorylated at Ser-863 by PKC, PKA and PRKG2. Phosphorylation of Ser-863 is reduced by induction of long-term depression and increased by induction of long-term potentiation. Widely expressed in brain.

The protein resides in the cell membrane. Its subcellular location is the endoplasmic reticulum membrane. The protein localises to the postsynaptic cell membrane. It localises to the postsynaptic density membrane. It is found in the cell projection. The protein resides in the dendrite. Its subcellular location is the dendritic spine. The protein localises to the early endosome membrane. It localises to the recycling endosome membrane. It is found in the presynapse. The protein resides in the synapse. The enzyme catalyses Ca(2+)(in) = Ca(2+)(out). It carries out the reaction Na(+)(in) = Na(+)(out). It catalyses the reaction Mg(2+)(in) = Mg(2+)(out). The catalysed reaction is Li(+)(in) = Li(+)(out). The enzyme catalyses K(+)(in) = K(+)(out). It carries out the reaction Sr(2+)(in) = Sr(2+)(out). In terms of biological role, ionotropic glutamate receptor that functions as a ligand-gated cation channel, gated by L-glutamate and glutamatergic agonists such as alpha-amino-3-hydroxy-5-methyl-4-isoxazolepropionic acid (AMPA), quisqualic acid, and kainic acid. L-glutamate acts as an excitatory neurotransmitter at many synapses in the central nervous system. Binding of the excitatory neurotransmitter L-glutamate induces a conformation change, leading to the opening of the cation channel, and thereby converts the chemical signal to an electrical impulse upon entry of monovalent and divalent cations such as sodium and calcium. The receptor then desensitizes rapidly and enters in a transient inactive state, characterized by the presence of bound agonist. In the presence of CACNG2 or CACNG4 or CACNG7 or CACNG8, shows resensitization which is characterized by a delayed accumulation of current flux upon continued application of L-glutamate. Resensitization is blocked by CNIH2 through interaction with CACNG8 in the CACNG8-containing AMPA receptors complex. Calcium (Ca(2+)) permeability depends on subunits composition and, heteromeric channels containing edited GRIA2 subunit are calcium-impermeable. Also permeable to other divalents cations such as strontium(2+) and magnesium(2+) and monovalent cations such as potassium(1+) and lithium(1+). This chain is Glutamate receptor 1, found in Homo sapiens (Human).